We begin with the raw amino-acid sequence, 145 residues long: Methyl-coenzyme M reductase I operon protein D (145 aa).

In terms of assembly, MCR is composed of three subunits: alpha, beta, and gamma. The function of proteins C and D is not known.

The sequence is that of Methyl-coenzyme M reductase I operon protein D (mcrD) from Methanothermobacter marburgensis (strain ATCC BAA-927 / DSM 2133 / JCM 14651 / NBRC 100331 / OCM 82 / Marburg) (Methanobacterium thermoautotrophicum).